The chain runs to 946 residues: Protein dct-6 (946 aa).

The stretch at 326-363 forms a coiled coil; that stretch reads YMDMNDQIEQMIALLVDQLEELEKLEQLCDEVQKTGNQ.

Its function is as follows. May have a role in tumor suppression. This Caenorhabditis briggsae protein is Protein dct-6.